The following is a 396-amino-acid chain: Phosphoglycerate kinase (396 aa).

Residues 21–23 (DFN), arginine 36, 59–62 (HLGK), arginine 119, and arginine 156 contribute to the substrate site. ATP is bound by residues lysine 206, glutamate 325, and 352-355 (GGDS).

This sequence belongs to the phosphoglycerate kinase family. In terms of assembly, monomer.

It is found in the cytoplasm. It catalyses the reaction (2R)-3-phosphoglycerate + ATP = (2R)-3-phospho-glyceroyl phosphate + ADP. It participates in carbohydrate degradation; glycolysis; pyruvate from D-glyceraldehyde 3-phosphate: step 2/5. The polypeptide is Phosphoglycerate kinase (Staphylococcus saprophyticus subsp. saprophyticus (strain ATCC 15305 / DSM 20229 / NCIMB 8711 / NCTC 7292 / S-41)).